A 108-amino-acid chain; its full sequence is Large ribosomal subunit protein uL24 (108 aa).

Belongs to the universal ribosomal protein uL24 family. In terms of assembly, part of the 50S ribosomal subunit.

Functionally, one of two assembly initiator proteins, it binds directly to the 5'-end of the 23S rRNA, where it nucleates assembly of the 50S subunit. Its function is as follows. One of the proteins that surrounds the polypeptide exit tunnel on the outside of the subunit. This is Large ribosomal subunit protein uL24 from Moorella thermoacetica (strain ATCC 39073 / JCM 9320).